The sequence spans 126 residues: Small ribosomal subunit protein bS6 (126 aa).

The interval 99–126 (PLPAPRVVPGTEAPEPAQAAETPEPEAS) is disordered. Residues 107 to 120 (PGTEAPEPAQAAET) are compositionally biased toward low complexity.

It belongs to the bacterial ribosomal protein bS6 family.

Its function is as follows. Binds together with bS18 to 16S ribosomal RNA. The polypeptide is Small ribosomal subunit protein bS6 (Synechococcus sp. (strain CC9902)).